The chain runs to 439 residues: tRNA-2-methylthio-N(6)-dimethylallyladenosine synthase (439 aa).

One can recognise an MTTase N-terminal domain in the interval 2-119 (KKLYLKTHGC…LPDLLDSVIQ (118 aa)). 6 residues coordinate [4Fe-4S] cluster: Cys-11, Cys-48, Cys-82, Cys-156, Cys-160, and Cys-163. A Radical SAM core domain is found at 142-374 (RAEGPSAFVS…QNRINAKAAE (233 aa)). One can recognise a TRAM domain in the interval 377–439 (QSMVGTQQRI…RPYSLWGEIC (63 aa)).

Belongs to the methylthiotransferase family. MiaB subfamily. Monomer. [4Fe-4S] cluster serves as cofactor.

Its subcellular location is the cytoplasm. It catalyses the reaction N(6)-dimethylallyladenosine(37) in tRNA + (sulfur carrier)-SH + AH2 + 2 S-adenosyl-L-methionine = 2-methylsulfanyl-N(6)-dimethylallyladenosine(37) in tRNA + (sulfur carrier)-H + 5'-deoxyadenosine + L-methionine + A + S-adenosyl-L-homocysteine + 2 H(+). Its function is as follows. Catalyzes the methylthiolation of N6-(dimethylallyl)adenosine (i(6)A), leading to the formation of 2-methylthio-N6-(dimethylallyl)adenosine (ms(2)i(6)A) at position 37 in tRNAs that read codons beginning with uridine. This Coxiella burnetii (strain CbuK_Q154) (Coxiella burnetii (strain Q154)) protein is tRNA-2-methylthio-N(6)-dimethylallyladenosine synthase.